Reading from the N-terminus, the 390-residue chain is L-serine phosphate decarboxylase Cj1436c (390 aa).

Lys243 bears the N6-(pyridoxal phosphate)lysine mark.

It belongs to the class-I pyridoxal-phosphate-dependent aminotransferase family. It depends on pyridoxal 5'-phosphate as a cofactor.

The catalysed reaction is O-phospho-L-serine + H(+) = phosphoethanolamine + CO2. It participates in capsule biogenesis; capsule polysaccharide biosynthesis. Its function is as follows. Pyridoxal phosphate (PLP)-dependent decarboxylase involved in the biosynthesis of amidated D-glucuronic acid structures found on the capsular polysaccharide (CPS) of C.jejuni. Catalyzes the decarboxylation of L-serine phosphate to ethanolamine phosphate. Less active with L-threonine phosphate. No activity with L-serine, L-threonine, L-aspartate or L-glutamate. The sequence is that of L-serine phosphate decarboxylase Cj1436c from Campylobacter jejuni subsp. jejuni serotype O:2 (strain ATCC 700819 / NCTC 11168).